The chain runs to 305 residues: Autophagy-related protein 27 (305 aa).

The first 22 residues, 1–22, serve as a signal peptide directing secretion; sequence MARYKGLSILSLFAVFSSLASA. Topologically, residues 23–242 are lumenal; sequence ELDCSNIKVD…EDGGSAPSGH (220 aa). Residues 24–231 enclose the MRH domain; it reads LDCSNIKVDG…EWKTKYACEN (208 aa). Disulfide bonds link cysteine 26–cysteine 66 and cysteine 74–cysteine 81. Asparagine 58 carries an N-linked (GlcNAc...) asparagine glycan. Asparagine 85 is a glycosylation site (N-linked (GlcNAc...) asparagine). Residues cysteine 156 and cysteine 229 are joined by a disulfide bond. The tract at residues 163-202 is disordered; that stretch reads LEGLESPKPDGDKKKDGEKKDDDKKDNKDKEGKSKRDGEE. The chain crosses the membrane as a helical span at residues 243-263; that stretch reads WGFFTWVIVLYVVLVSLPLLS. The Cytoplasmic portion of the chain corresponds to 264-305; sequence ERVTNVRCHSQPVPVHFGLSDIRLVAQLQPVWSSRVGLASSQ.

The protein belongs to the ATG27 family.

It localises to the cytoplasmic vesicle membrane. It is found in the golgi apparatus membrane. The protein resides in the mitochondrion membrane. Its subcellular location is the preautophagosomal structure membrane. In terms of biological role, effector of phosphatidylinositol 3-phosphate kinase signaling. Regulates the cytoplasm to vacuole transport (Cvt) vesicle formation. Plays a role in ATG protein retrieval from the pre-autophagosomal structure (PAS). This Arthroderma benhamiae (strain ATCC MYA-4681 / CBS 112371) (Trichophyton mentagrophytes) protein is Autophagy-related protein 27.